The following is a 355-amino-acid chain: MGCAVSTARDKEAIERSKNIDRALRAEGERAASEVKLLLLGAGESGKSTIVKQMKIIHDTGYSQEECEEYRRVVFSNTVQSLMVIIRAMGRLKIEFADPSRTDIARQFFTHASAADEGILLPEIVLLMKKLWADGGVQQSFARSREYQLNDSAGYYLNSLDRIAQPNYIPTQQDVLRTRVKTTGIIETHFSCKQLHFKLFDVGGQRSERKKWIHCFEGVTAIIFCVALSGYDLVLAEDEEMNRMIESLKLFDSICNSKWFVETSIILFLNKKDLFEEKIKRSPLTICFPEYTGTNTFEEAANYIRMKFENLNKRKDQKEIYTHLTCATDTNNVKFVFDAVTDVIIKNNLKQIGLF.

Residue Gly2 is the site of N-myristoyl glycine attachment. A lipid anchor (S-palmitoyl cysteine) is attached at Cys3. The region spanning 33–355 (SEVKLLLLGA…KNNLKQIGLF (323 aa)) is the G-alpha domain. The G1 motif stretch occupies residues 36–49 (KLLLLGAGESGKST). GTP-binding positions include 41 to 48 (GAGESGKS), 176 to 182 (LRTRVKT), 201 to 205 (DVGGQ), 270 to 273 (NKKD), and Ala327. Residues Ser48 and Thr182 each coordinate Mg(2+). The tract at residues 174–182 (DVLRTRVKT) is G2 motif. A G3 motif region spans residues 197–206 (FKLFDVGGQR). The interval 266–273 (ILFLNKKD) is G4 motif. Positions 325 to 330 (TCATDT) are G5 motif.

It belongs to the G-alpha family. G(i/o/t/z) subfamily. G proteins are composed of 3 units; alpha, beta and gamma. The alpha chain contains the guanine nucleotide binding site. Interacts (via GDP- or GTP-bound forms) with loco (via GoLoco and RGS domains). Interacts with raps/pins.

It localises to the cell membrane. The protein resides in the apical cell membrane. Its function is as follows. Guanine nucleotide-binding proteins (G proteins) are involved as modulators or transducers in various transmembrane signaling systems. Plays a role in glial cell differentiation during embryogenesis; loco, Galphao and the G-protein coupled receptor, moody, are required in the surface glia to achieve effective insulation of the nerve cord. The polypeptide is G protein alpha i subunit (Galphai) (Drosophila melanogaster (Fruit fly)).